Reading from the N-terminus, the 213-residue chain is Protein GrpE (213 aa).

A compositionally biased stretch (basic and acidic residues) spans Met-1–Ala-23. The disordered stretch occupies residues Met-1–Gly-43. Residues Glu-29–Gly-43 are compositionally biased toward low complexity.

The protein belongs to the GrpE family. Homodimer.

Its subcellular location is the cytoplasm. Its function is as follows. Participates actively in the response to hyperosmotic and heat shock by preventing the aggregation of stress-denatured proteins, in association with DnaK and GrpE. It is the nucleotide exchange factor for DnaK and may function as a thermosensor. Unfolded proteins bind initially to DnaJ; upon interaction with the DnaJ-bound protein, DnaK hydrolyzes its bound ATP, resulting in the formation of a stable complex. GrpE releases ADP from DnaK; ATP binding to DnaK triggers the release of the substrate protein, thus completing the reaction cycle. Several rounds of ATP-dependent interactions between DnaJ, DnaK and GrpE are required for fully efficient folding. This is Protein GrpE from Parvibaculum lavamentivorans (strain DS-1 / DSM 13023 / NCIMB 13966).